The sequence spans 862 residues: DNA mismatch repair protein MutS (862 aa).

ATP is bound at residue 608-615; that stretch reads GPNMAGKS.

Belongs to the DNA mismatch repair MutS family.

In terms of biological role, this protein is involved in the repair of mismatches in DNA. It is possible that it carries out the mismatch recognition step. This protein has a weak ATPase activity. This chain is DNA mismatch repair protein MutS, found in Bacteroides thetaiotaomicron (strain ATCC 29148 / DSM 2079 / JCM 5827 / CCUG 10774 / NCTC 10582 / VPI-5482 / E50).